Reading from the N-terminus, the 335-residue chain is Ornithine carbamoyltransferase (335 aa).

Carbamoyl phosphate is bound by residues 56–59 (STRT), glutamine 83, arginine 107, and 134–137 (HPTQ). Residues asparagine 168, aspartate 232, and 236-237 (SM) each bind L-ornithine. Residues 274-275 (CL) and arginine 320 contribute to the carbamoyl phosphate site.

The protein belongs to the aspartate/ornithine carbamoyltransferase superfamily. OTCase family.

Its subcellular location is the cytoplasm. It carries out the reaction carbamoyl phosphate + L-ornithine = L-citrulline + phosphate + H(+). Its pathway is amino-acid biosynthesis; L-arginine biosynthesis; L-arginine from L-ornithine and carbamoyl phosphate: step 1/3. Reversibly catalyzes the transfer of the carbamoyl group from carbamoyl phosphate (CP) to the N(epsilon) atom of ornithine (ORN) to produce L-citrulline. This is Ornithine carbamoyltransferase from Yersinia pestis bv. Antiqua (strain Nepal516).